The sequence spans 271 residues: Cytosolic Fe-S cluster assembly factor NUBP2 (271 aa).

Position 1 is an N-acetylmethionine (M1). 22 to 29 (GKGGVGKS) is an ATP binding site. [4Fe-4S] cluster contacts are provided by C196 and C199.

It belongs to the Mrp/NBP35 ATP-binding proteins family. NUBP2/CFD1 subfamily. In terms of assembly, heterotetramer of 2 NUBP1 and 2 NUBP2 chains. Interacts with KIFC1. Interacts with NUBP1. [4Fe-4S] cluster serves as cofactor. Widely expressed with highest expression in skeletal muscle.

It is found in the nucleus. The protein localises to the cytoplasm. Its subcellular location is the cytoskeleton. The protein resides in the microtubule organizing center. It localises to the centrosome. It is found in the cilium axoneme. The protein localises to the centriole. In terms of biological role, component of the cytosolic iron-sulfur (Fe/S) protein assembly (CIA) machinery. Required for maturation of extramitochondrial Fe-S proteins. The NUBP1-NUBP2 heterotetramer forms a Fe-S scaffold complex, mediating the de novo assembly of an Fe-S cluster and its transfer to target apoproteins. Negatively regulates cilium formation and structure. The chain is Cytosolic Fe-S cluster assembly factor NUBP2 from Homo sapiens (Human).